We begin with the raw amino-acid sequence, 813 residues long: Ribonuclease R (813 aa).

The region spanning 260–587 is the RNB domain; that stretch reads RVDLRDLPLV…LHRAIKYLLA (328 aa). Lys-544 carries the N6-acetyllysine modification. Residues 644 to 725 form the S1 motif domain; the sequence is GNVFKGVISS…DERKIDFSLI (82 aa). Residues 733–813 form a disordered region; that stretch reads NVGKTAREKA…KRAAKKKVAE (81 aa). Composition is skewed to basic and acidic residues over residues 737–749 and 761–774; these read TARE…DAGK and VNFE…GEKK. Residues 775–791 show a composition bias toward basic residues; it reads TKPKAAKKDARKAKKPS. The segment covering 792–801 has biased composition (low complexity); the sequence is AKTQKIAAAT. Positions 802-813 are enriched in basic residues; sequence KAKRAAKKKVAE.

Belongs to the RNR ribonuclease family. RNase R subfamily. In terms of assembly, monomer.

It is found in the cytoplasm. It carries out the reaction Exonucleolytic cleavage in the 3'- to 5'-direction to yield nucleoside 5'-phosphates.. 3'-5' exoribonuclease that releases 5'-nucleoside monophosphates and is involved in maturation of structured RNAs. Required for the expression of virulence genes on the large plasmid of S.flexneri at the post-transcriptional level. This is Ribonuclease R from Shigella flexneri.